Reading from the N-terminus, the 428-residue chain is Lysophosphatidic acid phosphatase type 6 (428 aa).

A mitochondrion-targeting transit peptide spans 1-32 (MITGVFSMRLWTPVGVLTSLAYCLHQRRVALA). The tract at residues 58-168 (RHGARSPRKP…VFIRSTNIFR (111 aa)) is substrate binding. H59 acts as the Nucleophile in catalysis. The Proton donor role is filled by D335.

It belongs to the histidine acid phosphatase family. In terms of assembly, monomer.

The protein localises to the mitochondrion. It carries out the reaction a phosphate monoester + H2O = an alcohol + phosphate. It catalyses the reaction 1-(9Z-octadecenoyl)-sn-glycero-3-phosphate + H2O = 1-(9Z-octadecenoyl)-sn-glycerol + phosphate. Functionally, hydrolyzes lysophosphatidic acid (LPA) containing a medium length fatty acid chain to the corresponding monoacylglycerol. Has highest activity with lysophosphatidic acid containing myristate (C14:0), monounsaturated oleate (C18:1) or palmitate (C16:0), and lower activity with C18:0 and C6:0 lysophosphatidic acid. The polypeptide is Lysophosphatidic acid phosphatase type 6 (ACP6) (Pongo abelii (Sumatran orangutan)).